Here is a 636-residue protein sequence, read N- to C-terminus: Transcriptional repressor CTCFL (636 aa).

Disordered regions lie at residues 17–38 (KEQK…VQRV), 160–195 (ENPE…DKRE), and 222–257 (LEEQ…PQSF). A compositionally biased stretch (acidic residues) spans 160-170 (ENPELTPDLDE). Positions 242-251 (AKPKRRRQTK) are enriched in basic residues. 11 consecutive C2H2-type zinc fingers follow at residues 257 to 279 (FQCD…IKIH), 285 to 307 (HLCH…VNTH), 313 to 336 (HKCR…RYKH), 342 to 364 (FKCS…IRSH), 370 to 392 (FQCC…MRTH), 398 to 421 (YECP…AQKH), 428 to 451 (YECP…RNLH), 458 to 480 (MKCR…QRTH), 486 to 508 (FKCK…MRMH), 514 to 537 (FSCL…RKYH), and 546 to 572 (HLCL…DPEH). The interval 562–624 (QRHRKKCDPE…AAGSQSPDHG (63 aa)) is disordered. The segment covering 568 to 583 (CDPEHETLAPNKDRRP) has biased composition (basic and acidic residues).

It belongs to the CTCF zinc-finger protein family. In terms of assembly, interacts with histones, PRMT7 and SETD1A. Interacts (via N-terminus) with BAG6/BAT3. As to expression, testis-specific.

It localises to the cytoplasm. The protein resides in the nucleus. Testis-specific DNA binding protein responsible for insulator function, nuclear architecture and transcriptional control, which probably acts by recruiting epigenetic chromatin modifiers. Plays a key role in gene imprinting in male germline, by participating in the establishment of differential methylation at the IGF2/H19 imprinted control region (ICR). Directly binds the unmethylated H19 ICR and recruits the PRMT7 methyltransferase, leading to methylate histone H4 'Arg-3' to form H4R3sme2. This probably leads to recruit de novo DNA methyltransferases at these sites. Seems to act as tumor suppressor. In association with DNMT1 and DNMT3B, involved in activation of BAG1 gene expression by binding to its promoter. Required for dimethylation of H3 lysine 4 (H3K4me2) of MYC and BRCA1 promoters. This is Transcriptional repressor CTCFL (Ctcfl) from Mus musculus (Mouse).